The chain runs to 149 residues: Transcriptional repressor NrdR (149 aa).

The segment at 3–34 is a zinc-finger region; sequence CPFCAAEETKVVDSRLAADGYQIRRRRECTSC. Positions 49-139 constitute an ATP-cone domain; the sequence is PYVIKNNGNR…VYLSFDDIEE (91 aa).

This sequence belongs to the NrdR family. It depends on Zn(2+) as a cofactor.

Its function is as follows. Negatively regulates transcription of bacterial ribonucleotide reductase nrd genes and operons by binding to NrdR-boxes. The chain is Transcriptional repressor NrdR from Actinobacillus pleuropneumoniae serotype 3 (strain JL03).